The primary structure comprises 545 residues: Sensory neuron membrane protein 1 (545 aa).

Residues 1-10 are Cytoplasmic-facing; the sequence is MELKERNFKK. The helical transmembrane segment at 11-31 threads the bilayer; that stretch reads IGLICVAVLLCGMVFSYGIFP. The Extracellular portion of the chain corresponds to 32 to 464; sequence SILRFMIKQN…LFLGLKFNAT (433 aa). N-linked (GlcNAc...) asparagine glycans are attached at residues Asn-69, Asn-214, and Asn-227. 3 cysteine pairs are disulfide-bonded: Cys-266-Cys-331, Cys-295-Cys-351, and Cys-333-Cys-340. 2 N-linked (GlcNAc...) asparagine glycosylation sites follow: Asn-444 and Asn-462. The chain crosses the membrane as a helical span at residues 465–485; that stretch reads VKWLTIIIGTVGAVGSAYMYF. The Cytoplasmic portion of the chain corresponds to 486 to 545; it reads RKETKTTDVAPVDVSTPDTNPSSAKDGVVNVSLGRNLPPVIDGLDKPPKLRATELQQERY.

Belongs to the CD36 family. As to expression, selectively expressed in antenna.

The protein resides in the cell membrane. Its function is as follows. Plays an olfactory role that is not restricted to pheromone sensitivity. In Anopheles gambiae (African malaria mosquito), this protein is Sensory neuron membrane protein 1 (snmp1).